An 84-amino-acid polypeptide reads, in one-letter code: Keratin-associated protein 19-4 (84 aa).

The protein belongs to the KRTAP type 19 family. As to quaternary structure, interacts with hair keratins.

In terms of biological role, in the hair cortex, hair keratin intermediate filaments are embedded in an interfilamentous matrix, consisting of hair keratin-associated proteins (KRTAP), which are essential for the formation of a rigid and resistant hair shaft through their extensive disulfide bond cross-linking with abundant cysteine residues of hair keratins. The matrix proteins include the high-sulfur and high-glycine-tyrosine keratins. The protein is Keratin-associated protein 19-4 (KRTAP19-4) of Homo sapiens (Human).